A 446-amino-acid polypeptide reads, in one-letter code: tRNA (guanine-N(7)-)-methyltransferase non-catalytic subunit TRM82 (446 aa).

Residues 67–97 (LTQTSEDTEQENTAPYKKQKSSVSKPIKVPK) form a disordered region. The segment covering 87–97 (SSVSKPIKVPK) has biased composition (low complexity). WD repeat units follow at residues 107–147 (PIYN…TENC), 202–243 (GHVS…IVKH), and 247–287 (GHRE…LLSK).

Belongs to the WD repeat TRM82 family. Forms a heterodimer with the catalytic subunit TRM8.

The protein localises to the nucleus. It participates in tRNA modification; N(7)-methylguanine-tRNA biosynthesis. Required for the formation of N(7)-methylguanine at position 46 (m7G46) in tRNA. In the complex, it is required to stabilize and induce conformational changes of the catalytic subunit. The polypeptide is tRNA (guanine-N(7)-)-methyltransferase non-catalytic subunit TRM82 (Debaryomyces hansenii (strain ATCC 36239 / CBS 767 / BCRC 21394 / JCM 1990 / NBRC 0083 / IGC 2968) (Yeast)).